The following is a 365-amino-acid chain: Probable dual-specificity RNA methyltransferase RlmN (365 aa).

E106 (proton acceptor) is an active-site residue. The region spanning 112 to 352 (YPDRVTLCVS…VTVRDTRGRE (241 aa)) is the Radical SAM core domain. An intrachain disulfide couples C119 to C357. C126, C130, and C133 together coordinate [4Fe-4S] cluster. S-adenosyl-L-methionine-binding positions include 181-182 (GE), S215, 238-240 (SLH), and N314. The active-site S-methylcysteine intermediate is C357.

It belongs to the radical SAM superfamily. RlmN family. It depends on [4Fe-4S] cluster as a cofactor.

It localises to the cytoplasm. It carries out the reaction adenosine(2503) in 23S rRNA + 2 reduced [2Fe-2S]-[ferredoxin] + 2 S-adenosyl-L-methionine = 2-methyladenosine(2503) in 23S rRNA + 5'-deoxyadenosine + L-methionine + 2 oxidized [2Fe-2S]-[ferredoxin] + S-adenosyl-L-homocysteine. The enzyme catalyses adenosine(37) in tRNA + 2 reduced [2Fe-2S]-[ferredoxin] + 2 S-adenosyl-L-methionine = 2-methyladenosine(37) in tRNA + 5'-deoxyadenosine + L-methionine + 2 oxidized [2Fe-2S]-[ferredoxin] + S-adenosyl-L-homocysteine. Specifically methylates position 2 of adenine 2503 in 23S rRNA and position 2 of adenine 37 in tRNAs. This chain is Probable dual-specificity RNA methyltransferase RlmN, found in Thermobifida fusca (strain YX).